Here is a 60-residue protein sequence, read N- to C-terminus: Antimicrobial peptide Eval151 (60 aa).

Residues 1-23 (MKVLPVLFLTLLVLISIPAETFC) form the signal peptide. An Arginine amide modification is found at Arg36. Positions 36-54 (RGKRNDFFRSDVSRDDESH) are enriched in basic and acidic residues. Residues 36-60 (RGKRNDFFRSDVSRDDESHPSPGQK) are disordered. The propeptide occupies 37-60 (GKRNDFFRSDVSRDDESHPSPGQK).

The protein belongs to the non-disulfide-bridged peptide (NDBP) superfamily. As to expression, expressed by the venom gland.

It is found in the secreted. Its function is as follows. Probable antimicrobial peptide. Has no inhibitory activity against herpes simplex virus type 1 (HSV-1). In Euscorpiops validus (Scorpion), this protein is Antimicrobial peptide Eval151.